We begin with the raw amino-acid sequence, 715 residues long: Coiled-coil domain-containing protein 13 (715 aa).

2 coiled-coil regions span residues 16-105 (KAMQ…KERD) and 134-458 (ATKI…NVHY). The interval 20-65 (EMQHKRLQKQMEKKREKELSLKSRADDQEEPLEVSDGLSLLHAGEP) is disordered. The segment covering 28 to 45 (KQMEKKREKELSLKSRAD) has biased composition (basic and acidic residues). Serine 258, serine 469, and serine 536 each carry phosphoserine. Disordered regions lie at residues 482–541 (EDPG…EQKG) and 607–645 (LEPG…DPSF). Residues 554–608 (QAAEVERDRLTEFVTVLQKRVEESNSKLLESERKLQEERHRTVVLEQHLEKIRLE) are a coiled coil. Residues 625 to 637 (GLPTSNNRHNPTG) are compositionally biased toward polar residues. Residues 653 to 683 (VESQMEELTTRLAIQVEENEMLKAALGSALR) adopt a coiled-coil conformation.

As to quaternary structure, interacts with PCM1, CEP290 and PCNT.

The protein localises to the cytoplasm. Its subcellular location is the cytoskeleton. It localises to the microtubule organizing center. The protein resides in the centrosome. It is found in the centriolar satellite. The protein localises to the cilium basal body. Its function is as follows. Required for primary cilia formation and promotes the localization of the ciliopathy protein BBS4 to both centriolar satellites and cilia. The sequence is that of Coiled-coil domain-containing protein 13 from Homo sapiens (Human).